We begin with the raw amino-acid sequence, 1028 residues long: Sporulation-specific protein 3 (1028 aa).

The protein resides in the prospore membrane. Has a role in spore morphogenesis. Involved in the assembly of the forespore membrane. The chain is Sporulation-specific protein 3 (spo3) from Schizosaccharomyces pombe (strain 972 / ATCC 24843) (Fission yeast).